The following is a 600-amino-acid chain: Glutamine--fructose-6-phosphate aminotransferase [isomerizing] (600 aa).

Cysteine 2 functions as the Nucleophile; for GATase activity in the catalytic mechanism. The Glutamine amidotransferase type-2 domain occupies 2 to 217 (CGIVGYIGQN…DKEIVLVSRN (216 aa)). 2 SIS domains span residues 283 to 422 (IRTA…VKGL) and 452 to 590 (LARD…VDKP). The active-site For Fru-6P isomerization activity is the lysine 595.

Homodimer.

It localises to the cytoplasm. The catalysed reaction is D-fructose 6-phosphate + L-glutamine = D-glucosamine 6-phosphate + L-glutamate. In terms of biological role, catalyzes the first step in hexosamine metabolism, converting fructose-6P into glucosamine-6P using glutamine as a nitrogen source. This chain is Glutamine--fructose-6-phosphate aminotransferase [isomerizing], found in Oceanobacillus iheyensis (strain DSM 14371 / CIP 107618 / JCM 11309 / KCTC 3954 / HTE831).